The chain runs to 237 residues: Lectin (237 aa).

A glycan (N-linked (GlcNAc...) asparagine) is linked at Asn-69. Ile-106 is modified (blocked amino end (Ile)). Mn(2+) contacts are provided by Glu-115 and Asp-117. Ca(2+)-binding residues include Asp-117, Tyr-120, Asn-122, and Asp-127. Mn(2+)-binding residues include Asp-127 and His-132.

This sequence belongs to the leguminous lectin family. In terms of assembly, tetramer of two alpha and two beta chains. The N-terminus of alpha chain is blocked. The alpha and beta chains are produced by proteolytic processing, with probably the loss of intervening amino acid(s).

In terms of biological role, D-mannose/D-glucose-binding lectin. Requires Ca(2+) and Mn(2+) ions for full activity. The sequence is that of Lectin from Lablab purpureus (Hyacinth bean).